We begin with the raw amino-acid sequence, 272 residues long: PHD finger protein ALFIN-LIKE 6 (272 aa).

Over residues 1-23 (MEGGGGGGGGGGGGGGGGGGGGA) the composition is skewed to gly residues. Disordered stretches follow at residues 1–24 (MEGG…GGAP) and 162–218 (QAKE…DNTL). Residues 168–182 (PNSSSKSNKPSSKVQ) are compositionally biased toward low complexity. The segment covering 183-200 (SKAESRSKSKLSAPKDEE) has biased composition (basic and acidic residues). Residues 201-214 (GSGDDEGEEEEDDH) are compositionally biased toward acidic residues. Residues 216–268 (NTLCGTCGTNDGKDEFWICCDNCEKWYHGKCVKITPARAEHIKQYKCPDCTNK) form a PHD-type zinc finger.

It belongs to the Alfin family.

The protein resides in the nucleus. Functionally, histone-binding component that specifically recognizes H3 tails trimethylated on 'Lys-4' (H3K4me3), which mark transcription start sites of virtually all active genes. This Oryza sativa subsp. indica (Rice) protein is PHD finger protein ALFIN-LIKE 6.